A 248-amino-acid polypeptide reads, in one-letter code: Probable transcriptional regulatory protein Nwi_2729 (248 aa).

The disordered stretch occupies residues 1 to 21 (MAGHSQFKNIMHRKGRQDAQK).

Belongs to the TACO1 family.

The protein resides in the cytoplasm. This is Probable transcriptional regulatory protein Nwi_2729 from Nitrobacter winogradskyi (strain ATCC 25391 / DSM 10237 / CIP 104748 / NCIMB 11846 / Nb-255).